The sequence spans 116 residues: Mercuric transport protein MerT (116 aa).

2 consecutive transmembrane segments (helical) span residues 16 to 36 and 46 to 66; these read LAAILASACCLGPLVLIALGF and VLEPYRPIFIGVALVALFFAW. Hg(2+)-binding residues include Cys-24 and Cys-25. Cys-76 and Cys-82 together coordinate Hg(2+). A helical transmembrane segment spans residues 94–114; sequence IFWGVAVLVLVALGFPYVVPF.

Belongs to the MerT family.

Its subcellular location is the cell inner membrane. Involved in mercury resistance. Probably transfers a mercuric ion from the periplasmic Hg(2+)-binding protein MerP to the cytoplasmic mercuric reductase MerA. This is Mercuric transport protein MerT from Pseudomonas fluorescens.